The sequence spans 395 residues: Xylose isomerase (395 aa).

Residues histidine 54 and glutamate 57 contribute to the active site. Positions 80 to 108 (AVPAGAGRDRHEGADGDDEPVHAPGCSRD) are disordered. Mg(2+) contacts are provided by glutamate 189, glutamate 225, histidine 228, aspartate 253, aspartate 263, aspartate 265, and aspartate 295.

This sequence belongs to the xylose isomerase family. Homotetramer. Mg(2+) serves as cofactor.

Its subcellular location is the cytoplasm. The catalysed reaction is alpha-D-xylose = alpha-D-xylulofuranose. This Streptomyces lividans protein is Xylose isomerase.